The sequence spans 288 residues: Pteridine reductase 1 (288 aa).

17-40 (RLGRSIAEGLHAEGYAVCLHYHRS) contributes to the NADP(+) binding site. A substrate-binding site is contributed by S175. Y194 (proton acceptor) is an active-site residue.

Belongs to the short-chain dehydrogenases/reductases (SDR) family. As to quaternary structure, homotetramer.

The enzyme catalyses (6R)-L-erythro-5,6,7,8-tetrahydrobiopterin + 2 NADP(+) = L-erythro-biopterin + 2 NADPH + 2 H(+). It participates in cofactor biosynthesis; tetrahydrobiopterin biosynthesis; tetrahydrobiopterin from biopterin: step 1/1. Functionally, exhibits a NADPH-dependent biopterin reductase activity. Has good activity with folate and significant activity with dihydrofolate and dihydrobiopterin, but not with quinonoid dihydrobiopterin. Confers resistance to methotrexate (MTX). The polypeptide is Pteridine reductase 1 (PTR1) (Leishmania major).